A 413-amino-acid chain; its full sequence is Transposon Ty4-H Gag polyprotein (413 aa).

A coiled-coil region spans residues 39-115 (RKVSIKDEQV…IQLLETNENN (77 aa)). The disordered stretch occupies residues 380-413 (RQQQLKSSAKRTKVLEQDTKKVKQSVQQQKTGNY). The span at 403-413 (QSVQQQKTGNY) shows a compositional bias: low complexity.

Its function is as follows. Capsid protein (CA) is the structural component of the virus-like particle (VLP), forming the shell that encapsulates the retrotransposons dimeric RNA genome. This chain is Transposon Ty4-H Gag polyprotein (TY4A-H), found in Saccharomyces cerevisiae (strain ATCC 204508 / S288c) (Baker's yeast).